Consider the following 362-residue polypeptide: P2Y purinoceptor 1 (362 aa).

Residues 1-40 (MTEALISAALNGTQPELLAGGWAAGNATTKCSLTKTGFQF) are Extracellular-facing. N-linked (GlcNAc...) asparagine glycans are attached at residues asparagine 11 and asparagine 26. 2 disulfides stabilise this stretch: cysteine 31/cysteine 285 and cysteine 113/cysteine 191. Lysine 35 lines the ADP pocket. The chain crosses the membrane as a helical span at residues 41–63 (YYLPTVYILVFITGFLGNSVAIW). Topologically, residues 64-76 (MFVFHMRPWSGIS) are cytoplasmic. Residues 77–98 (VYMFNLALADFLYVLTLPALIF) form a helical membrane-spanning segment. Residues 99–114 (YYFNKTDWIFGDVMCK) are Extracellular-facing. The N-linked (GlcNAc...) asparagine glycan is linked to asparagine 102. Residues 115–136 (LQRFIFHVNLYGSILFLTCISV) traverse the membrane as a helical segment. Topologically, residues 137 to 155 (HRYTGVVHPLKSLGRLKKK) are cytoplasmic. A helical membrane pass occupies residues 156–177 (NAVYVSSLVWALVVAVIAPILF). The Extracellular segment spans residues 178-203 (YSGTGVRRNKTITCYDTTADEYLRSY). Asparagine 186 is a glycosylation site (N-linked (GlcNAc...) asparagine). An ADP-binding site is contributed by 192–194 (YDT). The chain crosses the membrane as a helical span at residues 204–226 (FVYSMCTTVFMFCIPFIVILGCY). The Cytoplasmic segment spans residues 227–249 (GLIVKALIYKDLDNSPLRRKSIY). The chain crosses the membrane as a helical span at residues 250 to 273 (LVIIVLTVFAVSYLPFHVMKTLNL). ADP-binding positions include 272–276 (NLRAR), 292–295 (YATY), and arginine 299. Residues 274 to 292 (RARLDFQTPQMCAFNDKVY) lie on the Extracellular side of the membrane. The chain crosses the membrane as a helical span at residues 293 to 314 (ATYQVTRGLASLNSCVDPILYF). Residues 315–362 (LAGDTFRRRLSRATRKSSRRSEPNVQSKSEEMTLNILTEYKQNGDTSL) lie on the Cytoplasmic side of the membrane.

It belongs to the G-protein coupled receptor 1 family. As to expression, brain, spinal cord, gastrointestinal tract, spleen and leg muscle. Is not detected in the heart, liver, stomach, lung and kidney.

The protein resides in the cell membrane. Its function is as follows. Receptor for extracellular adenine nucleotides such as ADP. In platelets, binding to ADP leads to mobilization of intracellular calcium ions via activation of phospholipase C, a change in platelet shape, and ultimately platelet aggregation. The protein is P2Y purinoceptor 1 (P2RY1) of Gallus gallus (Chicken).